The following is a 213-amino-acid chain: Large ribosomal subunit protein uL4 (213 aa).

The interval 51–90 is disordered; the sequence is TASTLTKAEVRGGGRKPYKQKHTGRARQGSIRNPHYVGGG. Positions 63–75 are enriched in basic residues; that stretch reads GGRKPYKQKHTGR.

It belongs to the universal ribosomal protein uL4 family. As to quaternary structure, part of the 50S ribosomal subunit.

In terms of biological role, one of the primary rRNA binding proteins, this protein initially binds near the 5'-end of the 23S rRNA. It is important during the early stages of 50S assembly. It makes multiple contacts with different domains of the 23S rRNA in the assembled 50S subunit and ribosome. Functionally, forms part of the polypeptide exit tunnel. In Malacoplasma penetrans (strain HF-2) (Mycoplasma penetrans), this protein is Large ribosomal subunit protein uL4.